The sequence spans 317 residues: Olfactory receptor 5AP2 (317 aa).

The Extracellular segment spans residues 1 to 32 (MVRSGKGIQNKNATEVTEFILLGLSDNPDLQG). N-linked (GlcNAc...) asparagine glycosylation is present at Asn12. Residues 33–53 (VLFALFLIIYTMTLVGNLGMM) traverse the membrane as a helical segment. Over 54–61 (ALIKIDRS) the chain is Cytoplasmic. A helical membrane pass occupies residues 62–82 (LHTPMYFFLSSLSFVDASYSS). At 83–106 (SVTPKMLVNLMAEDKSISFNGCAT) the chain is on the extracellular side. Cys104 and Cys196 are oxidised to a cystine. Residues 107–127 (QFFFFGSFLGTECFLLAMMAY) form a helical membrane-spanning segment. The Cytoplasmic portion of the chain corresponds to 128-140 (DRYAAIWNPLLYP). A helical membrane pass occupies residues 141-161 (VLMSGRICFMLVSTSFLAGFG). The Extracellular segment spans residues 162-203 (NAAIHTGMTFRLSFCGSNKINHFYCDTPPLLKLSCSDTHING). Residues 204 to 224 (IVIMAFSSFNVISCVLIVLIS) traverse the membrane as a helical segment. At 225-244 (YLCILIAILKMPSAEGRHKA) the chain is on the cytoplasmic side. A helical transmembrane segment spans residues 245 to 265 (FSTCASHLMAVTIFFGTILFM). The Extracellular segment spans residues 266–278 (YLRPTSSYSMEQD). A helical membrane pass occupies residues 279 to 299 (KVVSVFYTVVIPMLNPLIYSL). At 300–317 (KNKDVKKAVKKILHNYVV) the chain is on the cytoplasmic side.

It belongs to the G-protein coupled receptor 1 family.

The protein resides in the cell membrane. In terms of biological role, odorant receptor. The chain is Olfactory receptor 5AP2 from Mus musculus (Mouse).